Reading from the N-terminus, the 340-residue chain is Protein jhp_1168 (340 aa).

Seems to interact with H.pylori HolB.

Functionally, could be the functional equivalent of DNA polymerase III delta subunit (HolA). In Helicobacter pylori (strain J99 / ATCC 700824) (Campylobacter pylori J99), this protein is Protein jhp_1168.